The following is a 421-amino-acid chain: Zinc metalloproteinase-disintegrin-like crotastatin (421 aa).

The Peptidase M12B domain maps to 10 to 206 (KYVKLFLVAD…NMPQCILKKP (197 aa)). Residue Asn29 is glycosylated (N-linked (GlcNAc...) asparagine). Disulfide bonds link Cys121-Cys201, Cys161-Cys185, and Cys163-Cys168. His146 serves as a coordination point for Zn(2+). The active site involves Glu147. Positions 150 and 156 each coordinate Zn(2+). A Disintegrin domain is found at 214–299 (PAVCGNYFVE…TECTDRFQRN (86 aa)). 6 residues coordinate Ca(2+): Val216, Asn219, Phe221, Glu223, Glu226, and Asp229. Intrachain disulfides connect Cys217–Cys246, Cys228–Cys241, Cys230–Cys236, Cys240–Cys263, Cys254–Cys260, Cys259–Cys285, Cys272–Cys292, Cys279–Cys310, Cys303–Cys315, Cys322–Cys372, Cys337–Cys383, Cys350–Cys360, Cys367–Cys409, and Cys403–Cys414. The short motif at 278–280 (ECD) is the D/ECD-tripeptide element. Positions 280, 281, 283, 294, and 295 each coordinate Ca(2+).

Belongs to the venom metalloproteinase (M12B) family. P-III subfamily. P-IIIc sub-subfamily. As to quaternary structure, homodimer; disulfide-linked. Zn(2+) is required as a cofactor. As to expression, expressed by the venom gland.

The protein resides in the secreted. Snake venom zinc metalloprotease that induces apoptosis in vascular endothelial cells (VEC), without degrading the extracellular matrix (it cannot cleave collagen) or inhibiting adhesion of VEC. Has also fibrinogenolytic and hemorrhagic activities. In Crotalus durissus terrificus (South American rattlesnake), this protein is Zinc metalloproteinase-disintegrin-like crotastatin.